We begin with the raw amino-acid sequence, 149 residues long: uncharacterized protein (149 aa).

Residues 1-11 (MTKESKPDRLR) are compositionally biased toward basic and acidic residues. A disordered region spans residues 1-20 (MTKESKPDRLRQMGALNPKP).

This is an uncharacterized protein from Sinorhizobium fredii (strain NBRC 101917 / NGR234).